The chain runs to 503 residues: Maturase K (503 aa).

The protein belongs to the intron maturase 2 family. MatK subfamily.

The protein resides in the plastid. It localises to the chloroplast. Its function is as follows. Usually encoded in the trnK tRNA gene intron. Probably assists in splicing its own and other chloroplast group II introns. The protein is Maturase K of Stangeria eriopus (Natal grass cycad).